Consider the following 429-residue polypeptide: 3-phosphoshikimate 1-carboxyvinyltransferase (429 aa).

3-phosphoshikimate-binding residues include Lys-23, Ser-24, and Arg-28. A phosphoenolpyruvate-binding site is contributed by Lys-23. Residues Gly-95 and Arg-123 each coordinate phosphoenolpyruvate. Positions 168, 170, 316, and 343 each coordinate 3-phosphoshikimate. Gln-170 provides a ligand contact to phosphoenolpyruvate. Catalysis depends on Asp-316, which acts as the Proton acceptor. Phosphoenolpyruvate is bound by residues Arg-347 and Arg-389.

The protein belongs to the EPSP synthase family. Monomer.

The protein resides in the cytoplasm. It catalyses the reaction 3-phosphoshikimate + phosphoenolpyruvate = 5-O-(1-carboxyvinyl)-3-phosphoshikimate + phosphate. The protein operates within metabolic intermediate biosynthesis; chorismate biosynthesis; chorismate from D-erythrose 4-phosphate and phosphoenolpyruvate: step 6/7. Catalyzes the transfer of the enolpyruvyl moiety of phosphoenolpyruvate (PEP) to the 5-hydroxyl of shikimate-3-phosphate (S3P) to produce enolpyruvyl shikimate-3-phosphate and inorganic phosphate. The protein is 3-phosphoshikimate 1-carboxyvinyltransferase of Bacillus cereus (strain G9842).